Here is an 83-residue protein sequence, read N- to C-terminus: Disintegrin isoform D-3 (83 aa).

In terms of domain architecture, Disintegrin spans 2-83 (PPVCGNELLE…GKSSDCPWNH (82 aa)). Intrachain disulfides connect Cys-5–Cys-24, Cys-16–Cys-34, Cys-18–Cys-29, Cys-28–Cys-51, Cys-42–Cys-48, Cys-47–Cys-72, and Cys-60–Cys-79. The Cell attachment site signature appears at 64 to 66 (RGD).

The protein belongs to the venom metalloproteinase (M12B) family. P-II subfamily. P-IIa sub-subfamily. Monomer (disintegrin). As to expression, expressed by the venom gland.

Its subcellular location is the secreted. In terms of biological role, inhibits fibrinogen interaction with platelets. Acts by binding to alpha-IIb/beta-3 (ITGA2B/ITGB3) on the platelet surface and inhibits aggregation induced by ADP, thrombin, platelet-activating factor and collagen. This chain is Disintegrin isoform D-3, found in Bitis arietans (African puff adder).